A 115-amino-acid polypeptide reads, in one-letter code: Pro-neuregulin-4, membrane-bound isoform (115 aa).

Topologically, residues 1–62 (MPTDHEEPCG…SSIQTKSNLF (62 aa)) are extracellular. Positions 5 to 46 (HEEPCGPSHKSFCLNGGLCYVIPTIPSPFCRCVENYTGARCE) constitute an EGF-like domain. 3 disulfides stabilise this stretch: Cys-9-Cys-23, Cys-17-Cys-34, and Cys-36-Cys-45. Asn-39 carries an N-linked (GlcNAc...) asparagine glycan. A helical transmembrane segment spans residues 63–83 (EAFVALAVLVTLIIGAFYFLC). The Cytoplasmic segment spans residues 84–115 (RKGHFQRASSVQYDINLVETSSTSAHHSHEQH).

Belongs to the neuregulin family. As to quaternary structure, interacts with ERBB4. Proteolytic cleavage close to the plasma membrane on the external face leads to the release of the soluble growth factor form. In terms of processing, extensive glycosylation precedes the proteolytic cleavage.

The protein resides in the cell membrane. The protein localises to the secreted. In terms of biological role, low affinity ligand for the ERBB4 tyrosine kinase receptor. Concomitantly recruits ERBB1 and ERBB2 coreceptors, resulting in ligand-stimulated tyrosine phosphorylation and activation of the ERBB receptors. Does not bind to the ERBB1, ERBB2 and ERBB3 receptors. The polypeptide is Pro-neuregulin-4, membrane-bound isoform (NRG4) (Homo sapiens (Human)).